Here is a 183-residue protein sequence, read N- to C-terminus: Anterior gradient protein 1 (183 aa).

Residues 1 to 18 form the signal peptide; sequence MQAGLSLVCLVLLCSALG.

The protein belongs to the AGR family. As to expression, from stage 18 (neurula) onward, expressed in the cement gland until it degenerates. More weakly expressed in the adjacent hatching gland.

It is found in the secreted. In terms of biological role, does not appear to be required for cement gland formation. In Xenopus laevis (African clawed frog), this protein is Anterior gradient protein 1 (ag1).